A 118-amino-acid chain; its full sequence is Myotrophin (118 aa).

ANK repeat units lie at residues 1–30 (MSDK…DVNR), 34–65 (GGRK…NAPD), and 67–98 (HNIT…TVKG).

This sequence belongs to the myotrophin family.

Its subcellular location is the cytoplasm. The protein resides in the nucleus. It localises to the perinuclear region. In terms of biological role, regulates NF-kappa-B transcription factor activity. Promotes growth of cardiomyocytes, but not cardiomyocyte proliferation. Promotes cardiac muscle hypertrophy. Plays a role in the regulation of the growth of actin filaments. Inhibits the activity of the F-actin-capping protein complex. In Gallus gallus (Chicken), this protein is Myotrophin (MTPN).